The chain runs to 837 residues: Tuftelin-interacting protein 11 (837 aa).

2 stretches are compositionally biased toward basic and acidic residues: residues methionine 1–arginine 13 and valine 53–proline 64. Disordered stretches follow at residues methionine 1 to arginine 21, valine 53 to arginine 72, and leucine 85 to alanine 133. Serine 2, serine 59, and serine 98 each carry phosphoserine. Residues glutamate 91–glutamate 102 are compositionally biased toward acidic residues. Positions arginine 103–proline 116 are enriched in basic and acidic residues. Phosphoserine is present on serine 144. Residues threonine 149–serine 195 enclose the G-patch domain. Positions isoleucine 179 to proline 236 are disordered. Serine 210 carries the phosphoserine modification. Residues valine 700–asparagine 705 carry the Nuclear localization signal motif. The segment at isoleucine 710 to leucine 734 is required for nuclear speckle localization.

It belongs to the TFP11/STIP family. Identified in the spliceosome C complex. Found in the Intron Large (IL) complex, a post-mRNA release spliceosomal complex containing the excised intron, U2, U5 and U6 snRNPs, and splicing factors. Interacts with TUFT1. Interacts with DHX15; indicative for a recruitment of DHX15 to the IL complex. Interacts with GCFC2.

It is found in the cytoplasm. It localises to the nucleus. In terms of biological role, involved in pre-mRNA splicing, specifically in spliceosome disassembly during late-stage splicing events. Intron turnover seems to proceed through reactions in two lariat-intron associated complexes termed Intron Large (IL) and Intron Small (IS). In cooperation with DHX15 seems to mediate the transition of the U2, U5 and U6 snRNP-containing IL complex to the snRNP-free IS complex leading to efficient debranching and turnover of excised introns. May play a role in the differentiation of ameloblasts and odontoblasts or in the forming of the enamel extracellular matrix. The polypeptide is Tuftelin-interacting protein 11 (TFIP11) (Macaca fascicularis (Crab-eating macaque)).